We begin with the raw amino-acid sequence, 99 residues long: Antitoxin VapB47 (99 aa).

This sequence belongs to the phD/YefM antitoxin family.

In terms of biological role, antitoxin component of a type II toxin-antitoxin (TA) system. The protein is Antitoxin VapB47 (vapB47) of Mycobacterium tuberculosis (strain CDC 1551 / Oshkosh).